The sequence spans 1166 residues: ATP-dependent helicase/deoxyribonuclease subunit B (1166 aa).

The UvrD-like helicase ATP-binding domain maps to 1–278 (MGAEFLVGRS…LNLDITYKEL (278 aa)). The ATP site is built by S10, G11, K14, T15, K16, T236, and R283. The region spanning 281 to 586 (TERHTKTPEL…TFSLIPPALD (306 aa)) is the UvrD-like helicase C-terminal domain. [4Fe-4S] cluster contacts are provided by C801, C1121, C1124, and C1130.

This sequence belongs to the helicase family. AddB/RexB type 1 subfamily. Heterodimer of AddA and AddB. It depends on At low magnesium concentrations there is no nuclease activity, but helicase activity is unaffected. as a cofactor. Requires Mg(2+) as cofactor. [4Fe-4S] cluster serves as cofactor.

Its function is as follows. The heterodimer acts both as a highly processive, ATP-dependent DNA helicase and as an ATP-dependent single-stranded exonuclease, acting in both directions. Recognizes the B.subtilis Chi site (5'-AGCGG-3') which transforms the enzyme from a helicase which degrades both DNA strands to one with only 5' to 3' exonuclease activity. This generates a double-stranded DNA with a protruding 3'-terminated single-stranded tail suitable for the initiation of homologous recombination (Chi fragment). The AddB nuclease domain is not required for Chi fragment generation but for recognition of the Chi site; this subunit has 5' -&gt; 3' nuclease activity but no helicase activity. The helicase activity of isolated AddA acts on 3'-tailed substrate and requires AddB to bind to blunt-ended DNA. RecA thread formation during DNA double-strand break repair requires RecJ or AddAB. This Bacillus subtilis (strain 168) protein is ATP-dependent helicase/deoxyribonuclease subunit B.